A 1167-amino-acid polypeptide reads, in one-letter code: MEPENYLAWLARDIVRNLSYTSLVYNNPKVAIVELLDNKEAFFTYEKEQKTPEALINYIDSIVKSSISVEDKIEALLKIRYISVYVDDKSDKRDIVLQLLNRTIKKIESKTKISNELNDAINAITIESRNWKIQNSESFKPYHYNQLVSDFLKYNEFEILEGTDPLKWKSDTLQGLSPNYNHRTHTLISSIIYATSVRFDNYNDEQLQVLLYLFSIIKTNYVNGYLEILPNRKWSHSLADLRENKSIMMYSAKIIHASCAMISILHAVPIDYFFLAQIIASFSEIPAHAAKQLSSPMTLYIGIAQLRSNIVVSTKIAAESVATESPNISRLEESQLREWEQEMNEYPFQSSRMVRMMKKNIFDVSVDVFYAIFNCFSATFHVGHRIDNPQDAIEAQVKVEYTSDVDKEMYDQYYFLLKRMLTDQLAEYAEEMYFKYNSDVTAESLAAMANSSNGYSRSVTFIDREIKTTKKMLHLDDDLSKNLNFTNIGEQIKKGIPMGTRNVPARQTRGIFILSWQVAAIQHTIAEFLYKKAKKGGFGATFAEAYVSKAATLTYGILAEATSKADQLILYTDVSQWDASQHNTEPYRSAWINAIKEARTKYKINYNQEPVVLGMNVLDKMIEIQEALLNSNLIVESQGSKRQPLRIKYHGVASGEKTTKIGNSFANVALITTVFNNLTNTMPSIRVNHMRVDGDDNVVTMYTANRIDEVQENIKEKYKRMNAKVKALASYTGLEMAKRFIICGKIFERGAISIFTAERPYGTDLSVQSTTGSLIYSAAVNAYRGFGDDYLNFMTDVLVPPSASVKITGRLRSLLSPVTLYSTGPLSFEITPYGLGGRMRLFSLSKENMELYKILTSSLAISIQPDEIKKYSSTPQFKARVDRMISSVQIAMKSEAKIITSILRDKEEQKTLGVPNVATAKNRQQIDKARKTLSLPKEILPKVTKYYPEEIFHLILRNSTLTIPKLNTMTKVYMNNSVNITKLQQQIGVRVSSGIQVHKPINTLLKLVEKHSPIKISPSDLILYSKKYDLTNLNGKKQFLMDLGISGNELRFYLNSKLLFHDLLLSKYDKLYEAPGFGATQLNALPLDLTAAEKVFSIKLNLPNTYYELLMLVLLYEYVNFVMFTGNTFRAVCIPESQTINAKLVKTIMTMIDNIQLDTVMFSDNIF.

One can recognise a RdRp catalytic domain in the interval 553-735 (LTYGILAEAT…KALASYTGLE (183 aa)).

This sequence belongs to the reoviridae RNA-directed RNA polymerase family. As to quaternary structure, interacts with VP3 (Potential). Interacts with VP2 (Potential). Interacts with NSP5; this interaction is probably necessary for the formation of functional virus factories.

The protein localises to the virion. It carries out the reaction RNA(n) + a ribonucleoside 5'-triphosphate = RNA(n+1) + diphosphate. Functionally, RNA-directed RNA polymerase that is involved in both transcription and genome replication. Together with VP3 capping enzyme, forms an enzyme complex positioned near the channels situated at each of the five-fold vertices of the core. Following infection, the outermost layer of the virus is lost, leaving a double-layered particle (DLP) made up of the core and VP6 shell. VP1 then catalyzes the transcription of fully conservative plus-strand genomic RNAs that are extruded through the DLP's channels into the cytoplasm where they function as mRNAs for translation of viral proteins. One copy of each of the viral (+)RNAs is also recruited during core assembly, together with newly synthesized polymerase complexes and VP2. The polymerase of these novo-formed particles catalyzes the synthesis of complementary minus-strands leading to dsDNA formation. To do so, the polymerase specifically recognizes conserved 3' sequence(s) in plus-strand RNA templates. Once dsRNA synthesis is complete, the polymerase switches to the transcriptional mode, thus providing secondary transcription. The sequence is that of RNA-directed RNA polymerase from Rotavirus X (isolate RVX/Human/Bangladesh/NADRV-B219/2002/GXP[X]) (RV ADRV-N).